Reading from the N-terminus, the 188-residue chain is Elongation factor P (188 aa).

The protein belongs to the elongation factor P family.

The protein resides in the cytoplasm. Its pathway is protein biosynthesis; polypeptide chain elongation. In terms of biological role, involved in peptide bond synthesis. Stimulates efficient translation and peptide-bond synthesis on native or reconstituted 70S ribosomes in vitro. Probably functions indirectly by altering the affinity of the ribosome for aminoacyl-tRNA, thus increasing their reactivity as acceptors for peptidyl transferase. This chain is Elongation factor P, found in Wolbachia pipientis wMel.